The primary structure comprises 201 residues: Orotate phosphoribosyltransferase (201 aa).

Residue 113–121 participates in 5-phospho-alpha-D-ribose 1-diphosphate binding; that stretch reads EDIITTGKS. Orotate-binding residues include Thr-117 and Arg-145.

Belongs to the purine/pyrimidine phosphoribosyltransferase family. PyrE subfamily. In terms of assembly, homodimer. It depends on Mg(2+) as a cofactor.

The catalysed reaction is orotidine 5'-phosphate + diphosphate = orotate + 5-phospho-alpha-D-ribose 1-diphosphate. It functions in the pathway pyrimidine metabolism; UMP biosynthesis via de novo pathway; UMP from orotate: step 1/2. In terms of biological role, catalyzes the transfer of a ribosyl phosphate group from 5-phosphoribose 1-diphosphate to orotate, leading to the formation of orotidine monophosphate (OMP). This Helicobacter acinonychis (strain Sheeba) protein is Orotate phosphoribosyltransferase.